An 854-amino-acid polypeptide reads, in one-letter code: Putative Tricorn-like protease C-terminal subunit (854 aa).

H539 (charge relay system) is an active-site residue. Positions 554–646 (PIGGLGADYE…RVTVKLLKDE (93 aa)) are PDZ-like. G709 contacts substrate. S756 functions as the Nucleophile in the catalytic mechanism. E814 serves as the catalytic Charge relay system.

Belongs to the peptidase S41B family.

Its subcellular location is the cytoplasm. Degrades oligopeptides in a sequential manner. This chain is Putative Tricorn-like protease C-terminal subunit (triC), found in Sulfurisphaera tokodaii (strain DSM 16993 / JCM 10545 / NBRC 100140 / 7) (Sulfolobus tokodaii).